The sequence spans 392 residues: Phosphoglycerate kinase (392 aa).

Substrate-binding positions include 21–23 (DFN), arginine 36, 59–62 (HLGR), arginine 113, and arginine 146. ATP contacts are provided by residues lysine 197, glutamate 319, and 345 to 348 (GGDT).

This sequence belongs to the phosphoglycerate kinase family. In terms of assembly, monomer.

The protein localises to the cytoplasm. It carries out the reaction (2R)-3-phosphoglycerate + ATP = (2R)-3-phospho-glyceroyl phosphate + ADP. The protein operates within carbohydrate degradation; glycolysis; pyruvate from D-glyceraldehyde 3-phosphate: step 2/5. This chain is Phosphoglycerate kinase, found in Francisella philomiragia subsp. philomiragia (strain ATCC 25017 / CCUG 19701 / FSC 153 / O#319-036).